Reading from the N-terminus, the 263-residue chain is Small ribosomal subunit protein eS4, Y isoform 1 (263 aa).

The S4 RNA-binding domain maps to 42–104 (LPLIIFLRNR…TGEHFRLVYD (63 aa)).

Belongs to the eukaryotic ribosomal protein eS4 family.

The sequence is that of Small ribosomal subunit protein eS4, Y isoform 1 (RPS4Y1) from Monodelphis domestica (Gray short-tailed opossum).